Reading from the N-terminus, the 171-residue chain is Shikimate kinase (171 aa).

14 to 19 (GAGKST) provides a ligand contact to ATP. Serine 18 contacts Mg(2+). Substrate contacts are provided by aspartate 36, arginine 60, and glycine 82. Arginine 120 contacts ATP. Residue arginine 139 coordinates substrate. Glutamine 156 contacts ATP.

The protein belongs to the shikimate kinase family. As to quaternary structure, monomer. It depends on Mg(2+) as a cofactor.

The protein localises to the cytoplasm. It catalyses the reaction shikimate + ATP = 3-phosphoshikimate + ADP + H(+). The protein operates within metabolic intermediate biosynthesis; chorismate biosynthesis; chorismate from D-erythrose 4-phosphate and phosphoenolpyruvate: step 5/7. Functionally, catalyzes the specific phosphorylation of the 3-hydroxyl group of shikimic acid using ATP as a cosubstrate. The sequence is that of Shikimate kinase from Shewanella baltica (strain OS195).